A 389-amino-acid chain; its full sequence is PqqA peptide cyclase (389 aa).

In terms of domain architecture, Radical SAM core spans 19–235 (VGLPLWLLAE…NEYRVRLEAE (217 aa)). [4Fe-4S] cluster contacts are provided by C33, C37, and C40.

This sequence belongs to the radical SAM superfamily. PqqE family. As to quaternary structure, interacts with PqqD. The interaction is necessary for activity of PqqE. The cofactor is [4Fe-4S] cluster.

It carries out the reaction [PQQ precursor protein] + S-adenosyl-L-methionine = E-Y cross-linked-[PQQ precursor protein] + 5'-deoxyadenosine + L-methionine + H(+). The protein operates within cofactor biosynthesis; pyrroloquinoline quinone biosynthesis. Functionally, catalyzes the cross-linking of a glutamate residue and a tyrosine residue in the PqqA protein as part of the biosynthesis of pyrroloquinoline quinone (PQQ). In Pseudomonas savastanoi pv. phaseolicola (strain 1448A / Race 6) (Pseudomonas syringae pv. phaseolicola (strain 1448A / Race 6)), this protein is PqqA peptide cyclase.